The primary structure comprises 230 residues: UPF0173 metal-dependent hydrolase MM_2300 (230 aa).

The protein belongs to the UPF0173 family.

This Methanosarcina mazei (strain ATCC BAA-159 / DSM 3647 / Goe1 / Go1 / JCM 11833 / OCM 88) (Methanosarcina frisia) protein is UPF0173 metal-dependent hydrolase MM_2300.